The primary structure comprises 180 residues: Inner membrane-spanning protein YciB (180 aa).

5 helical membrane passes run 22 to 42 (IFVA…FTWL), 50 to 70 (MTLV…AFHS), 72 to 92 (LFIK…LLVS), 121 to 141 (LSWA…AFWL), and 149 to 169 (FKVF…GVYI).

It belongs to the YciB family.

It localises to the cell inner membrane. Functionally, plays a role in cell envelope biogenesis, maintenance of cell envelope integrity and membrane homeostasis. The chain is Inner membrane-spanning protein YciB from Yersinia pseudotuberculosis serotype O:1b (strain IP 31758).